Reading from the N-terminus, the 720-residue chain is MVDAMPENPAEEPTAASAAPNPEAVPDAVGQPEAPVKDRKVPGEYGASAITVLEGLEAVRKRPGMYIGSTGPRGLHHLVYEVVDNSVDEALAGYATGIDVTLQADGGVRVADDGRGIPVDLHPTEGRPTVEVVMTILHAGGKFGGGGYAVSGGLHGVGISVVNALSRRVDTEVRRQGHVWRMSFADGGVPQGELVKGEATDATGTVQTFYPDAEIFDSIEFDYETLRARFQQMAFLNKGLRITLTDERVQESNEVVDDEIAGEGAAGEDVAENGLAEDAEQEPQRRSVTYLYENGLLDYVQHLNSAKKVEYVHDDVIAFEAEDFSDGRSMAVEVAMQWTSAYSESVHTYANTINTHEGGTHEEGFRAALTSLVNRYAREKEILKPKEDNLSGEDIREGLTAVISVKLSEPQFEGQTKTKLGNSEARGFVSKAVTDHLGDWFERNPGPAKEIIRKAIMASHARLAARKARDNARRKSPLESFGMPGKLADCSSKDPERCEVYIVEGDSAGGSAKQGRNPETQAILPLRGKILNVERARLDKALGNAEIQSMITAFGTNIGEEFDISKLRYHKIVLMADADVDGQHITTLLLTVLFRYMRPLIEAGHVFLAQPPLYRIKWSNAPHDYVFSDEERDAAVEAGLAKGWRYPKDNGVQRYKGLGEMNYQELWDTTMDPEHRTLLQVTMEDAAAADAVFSMLMGEDVESRRTFIQQNAKDIRFLDV.

A compositionally biased stretch (low complexity) spans 1–26; that stretch reads MVDAMPENPAEEPTAASAAPNPEAVP. Residues 1 to 42 form a disordered region; sequence MVDAMPENPAEEPTAASAAPNPEAVPDAVGQPEAPVKDRKVP. A Toprim domain is found at 498–612; the sequence is CEVYIVEGDS…AGHVFLAQPP (115 aa). 3 residues coordinate Mg(2+): Glu504, Asp577, and Asp579.

The protein belongs to the type II topoisomerase GyrB family. In terms of assembly, heterotetramer, composed of two GyrA and two GyrB chains. In the heterotetramer, GyrA contains the active site tyrosine that forms a transient covalent intermediate with the DNA, while GyrB binds cofactors and catalyzes ATP hydrolysis. It depends on Mg(2+) as a cofactor. The cofactor is Mn(2+). Ca(2+) serves as cofactor.

It is found in the cytoplasm. The catalysed reaction is ATP-dependent breakage, passage and rejoining of double-stranded DNA.. Supercoiling activity inhibited by novobiocin and coumermycin, DNA wrapping around gyrase is not inhibited. In terms of biological role, a type II topoisomerase that negatively supercoils DNA in an ATP-dependent manner. About 140 bp of DNA wraps around gyrase in the presence or absence of ATP, when ATP is added negative supercoils are made. A type II topoisomerase that negatively supercoils closed circular double-stranded (ds) DNA in an ATP-dependent manner to modulate DNA topology and maintain chromosomes in an underwound state. Negative supercoiling favors strand separation, and DNA replication, transcription, recombination and repair, all of which involve strand separation. Also able to catalyze the interconversion of other topological isomers of dsDNA rings, including catenanes and knotted rings. Type II topoisomerases break and join 2 DNA strands simultaneously in an ATP-dependent manner. This chain is DNA gyrase subunit B, found in Micrococcus luteus (strain ATCC 4698 / DSM 20030 / JCM 1464 / CCM 169 / CCUG 5858 / IAM 1056 / NBRC 3333 / NCIMB 9278 / NCTC 2665 / VKM Ac-2230) (Micrococcus lysodeikticus).